A 154-amino-acid chain; its full sequence is Mitochondrial fission 1 protein (154 aa).

Topologically, residues 1-124 (MEDLLNEVVP…KEIDKEVAKG (124 aa)) are cytoplasmic. Residues 125-145 (MVVAGGAALVLGGILGLGIAM) traverse the membrane as a helical segment. The Mitochondrial intermembrane portion of the chain corresponds to 146-154 (ARNKQKREK).

The protein belongs to the FIS1 family.

The protein resides in the mitochondrion outer membrane. In terms of biological role, involved in the fragmentation of the mitochondrial network and its perinuclear clustering. Functions downstream of Pink1 and upstream of Drp1 to regulate mitochondrial fission. In Drosophila melanogaster (Fruit fly), this protein is Mitochondrial fission 1 protein.